The following is a 153-amino-acid chain: Ribonuclease H (153 aa).

The 142-residue stretch at methionine 1–glutamate 142 folds into the RNase H type-1 domain. Mg(2+) is bound by residues aspartate 10, glutamate 48, aspartate 70, and aspartate 134.

It belongs to the RNase H family. In terms of assembly, monomer. Mg(2+) serves as cofactor.

Its subcellular location is the cytoplasm. It catalyses the reaction Endonucleolytic cleavage to 5'-phosphomonoester.. Endonuclease that specifically degrades the RNA of RNA-DNA hybrids. In Baumannia cicadellinicola subsp. Homalodisca coagulata, this protein is Ribonuclease H.